Reading from the N-terminus, the 180-residue chain is Cytidylate kinase (180 aa).

Position 7-15 (Gly7–Thr15) interacts with ATP.

Belongs to the cytidylate kinase family. Type 2 subfamily.

The protein resides in the cytoplasm. It catalyses the reaction CMP + ATP = CDP + ADP. The catalysed reaction is dCMP + ATP = dCDP + ADP. In Sulfurisphaera tokodaii (strain DSM 16993 / JCM 10545 / NBRC 100140 / 7) (Sulfolobus tokodaii), this protein is Cytidylate kinase.